Here is a 212-residue protein sequence, read N- to C-terminus: Imidazole glycerol phosphate synthase subunit HisH (212 aa).

A Glutamine amidotransferase type-1 domain is found at 3–208; sequence RIVIVDYGMG…GRMVCDLIST (206 aa). The active-site Nucleophile is the Cys-81. Active-site residues include His-183 and Glu-185.

Heterodimer of HisH and HisF.

The protein localises to the cytoplasm. It catalyses the reaction 5-[(5-phospho-1-deoxy-D-ribulos-1-ylimino)methylamino]-1-(5-phospho-beta-D-ribosyl)imidazole-4-carboxamide + L-glutamine = D-erythro-1-(imidazol-4-yl)glycerol 3-phosphate + 5-amino-1-(5-phospho-beta-D-ribosyl)imidazole-4-carboxamide + L-glutamate + H(+). The enzyme catalyses L-glutamine + H2O = L-glutamate + NH4(+). It participates in amino-acid biosynthesis; L-histidine biosynthesis; L-histidine from 5-phospho-alpha-D-ribose 1-diphosphate: step 5/9. Its function is as follows. IGPS catalyzes the conversion of PRFAR and glutamine to IGP, AICAR and glutamate. The HisH subunit catalyzes the hydrolysis of glutamine to glutamate and ammonia as part of the synthesis of IGP and AICAR. The resulting ammonia molecule is channeled to the active site of HisF. This chain is Imidazole glycerol phosphate synthase subunit HisH, found in Symbiobacterium thermophilum (strain DSM 24528 / JCM 14929 / IAM 14863 / T).